The following is a 388-amino-acid chain: MPRDYYDILGVDEDASDKEIKKAYRKKAMEYHPDRNPDDPEAEQKFKEASEAYEVLSDPEKRQRYDQFGHDGVDSGAGGGRRGRGRGFHDIEDIFDAFSDIFGGAPGGGRGRGRSERGRGRPGSDLRVSLSLTLEEIAEGTEKNLRLQKYLECESCDGTGAEGGMGGQNFSMCPKCDGTGEIRQVSRSVFGQVVNVQPCPRCEGEGRIIDNLCDDCGGEGRVQGEESISINVPPGVMEGNYLTLGDAGNAGLRGGPSGDLRIEIEEEPHEHFERDGLDIYYDLHLSFPEAALGTEVDVPTLEGEARLEVDPGVQAGKILRMRDRGLPDLEGSGQGDQMIRVHVWTPQELTAEEEELLDQLRAHDNFQPRPPEEDTQKSFFRRVSDVFS.

The 66-residue stretch at D4–G69 folds into the J domain. 3 stretches are compositionally biased toward basic and acidic residues: residues K27 to S50, D58 to V73, and G113 to S124. 2 disordered regions span residues K27 to R86 and S99 to D125. The CR-type zinc-finger motif lies at G140–E225. C153, C156, C173, C176, C199, C202, C213, and C216 together coordinate Zn(2+). CXXCXGXG motif repeat units follow at residues C153–G160, C173–G180, C199–G206, and C213–G220. Over residues A362–Q376 the composition is skewed to basic and acidic residues. Residues A362 to S388 form a disordered region.

Belongs to the DnaJ family. Homodimer. Zn(2+) serves as cofactor.

The protein resides in the cytoplasm. In terms of biological role, participates actively in the response to hyperosmotic and heat shock by preventing the aggregation of stress-denatured proteins and by disaggregating proteins, also in an autonomous, DnaK-independent fashion. Unfolded proteins bind initially to DnaJ; upon interaction with the DnaJ-bound protein, DnaK hydrolyzes its bound ATP, resulting in the formation of a stable complex. GrpE releases ADP from DnaK; ATP binding to DnaK triggers the release of the substrate protein, thus completing the reaction cycle. Several rounds of ATP-dependent interactions between DnaJ, DnaK and GrpE are required for fully efficient folding. Also involved, together with DnaK and GrpE, in the DNA replication of plasmids through activation of initiation proteins. The protein is Chaperone protein DnaJ of Salinibacter ruber (strain DSM 13855 / M31).